Here is a 185-residue protein sequence, read N- to C-terminus: Ribosome-recycling factor (185 aa).

It belongs to the RRF family.

The protein resides in the cytoplasm. Responsible for the release of ribosomes from messenger RNA at the termination of protein biosynthesis. May increase the efficiency of translation by recycling ribosomes from one round of translation to another. In Streptococcus pyogenes serotype M1, this protein is Ribosome-recycling factor.